A 563-amino-acid chain; its full sequence is Bifunctional dihydrofolate reductase-thymidylate synthase (563 aa).

One can recognise a DHFR domain in the interval 3 to 195 (KFNIIAAINN…ILLRFQEYSV (193 aa)). NADP(+) is bound at residue 117 to 124 (GGGVIYDL). The interval 275-563 (YIELVKTIME…CPSISAEMIA (289 aa)) is thymidylate synthase. Arg-292 lines the dUMP pocket. Residue Cys-435 is part of the active site. Residues His-436, 464–468 (QRSWD), Asn-474, and 504–506 (HIY) each bind dUMP.

The protein in the N-terminal section; belongs to the dihydrofolate reductase family. In the C-terminal section; belongs to the thymidylate synthase family.

It carries out the reaction (6S)-5,6,7,8-tetrahydrofolate + NADP(+) = 7,8-dihydrofolate + NADPH + H(+). The catalysed reaction is dUMP + (6R)-5,10-methylene-5,6,7,8-tetrahydrofolate = 7,8-dihydrofolate + dTMP. It functions in the pathway cofactor biosynthesis; tetrahydrofolate biosynthesis; 5,6,7,8-tetrahydrofolate from 7,8-dihydrofolate: step 1/1. Its function is as follows. Bifunctional enzyme. Involved in de novo dTMP biosynthesis. Key enzyme in folate metabolism. Catalyzes an essential reaction for de novo glycine and purine synthesis, DNA precursor synthesis, and for the conversion of dUMP to dTMP. The protein is Bifunctional dihydrofolate reductase-thymidylate synthase of Acanthamoeba polyphaga mimivirus (APMV).